A 288-amino-acid polypeptide reads, in one-letter code: Bifunctional protein FolD (288 aa).

NADP(+) contacts are provided by residues 166–168 (GAS) and Ile232.

It belongs to the tetrahydrofolate dehydrogenase/cyclohydrolase family. Homodimer.

It catalyses the reaction (6R)-5,10-methylene-5,6,7,8-tetrahydrofolate + NADP(+) = (6R)-5,10-methenyltetrahydrofolate + NADPH. It carries out the reaction (6R)-5,10-methenyltetrahydrofolate + H2O = (6R)-10-formyltetrahydrofolate + H(+). Its pathway is one-carbon metabolism; tetrahydrofolate interconversion. In terms of biological role, catalyzes the oxidation of 5,10-methylenetetrahydrofolate to 5,10-methenyltetrahydrofolate and then the hydrolysis of 5,10-methenyltetrahydrofolate to 10-formyltetrahydrofolate. In Salmonella heidelberg (strain SL476), this protein is Bifunctional protein FolD.